The following is a 118-amino-acid chain: Myotrophin (118 aa).

3 ANK repeats span residues 1 to 30 (MGDK…DVNR), 34 to 65 (GGRK…NAPD), and 67 to 98 (HGIT…NRKG).

This sequence belongs to the myotrophin family.

It localises to the cytoplasm. Its subcellular location is the nucleus. The protein localises to the perinuclear region. Functionally, regulates NF-kappa-B transcription factor activity. Promotes growth of cardiomyocytes, but not cardiomyocyte proliferation. Promotes cardiac muscle hypertrophy. Plays a role in the regulation of the growth of actin filaments. Inhibits the activity of the F-actin-capping protein complex. The protein is Myotrophin (mtpn) of Danio rerio (Zebrafish).